A 118-amino-acid chain; its full sequence is Peptidyl-tRNA hydrolase (118 aa).

This sequence belongs to the PTH2 family.

It localises to the cytoplasm. The catalysed reaction is an N-acyl-L-alpha-aminoacyl-tRNA + H2O = an N-acyl-L-amino acid + a tRNA + H(+). The natural substrate for this enzyme may be peptidyl-tRNAs which drop off the ribosome during protein synthesis. The protein is Peptidyl-tRNA hydrolase of Thermococcus sibiricus (strain DSM 12597 / MM 739).